A 1930-amino-acid chain; its full sequence is Ankyrin repeat domain-containing protein SAT10 (1930 aa).

ANK repeat units follow at residues 840–872 (FRHT…DLEE), 878–908 (GTWN…GVLN), 920–949 (SGNT…MRGY), 959–989 (QRSS…DYSK), 993–1023 (NGAS…FSNE), 1073–1102 (SGLT…DANG), 1106–1135 (EFEA…TKTE), 1144–1174 (GRTR…QLSH), 1178–1205 (NQRT…ETET), 1206–1235 (GLQE…EINA), 1239–1268 (YGNT…RLDL), 1272–1301 (DNVN…DVNA), 1304–1333 (GGDT…KFIL), 1339–1368 (RFEN…ERDL), 1400–1429 (SGWT…GRAA), 1514–1543 (QNML…SLTP), 1548–1577 (RHGT…MLAD), 1615–1644 (MGRN…NEDL), 1651–1680 (DGWT…KIFD), and 1696–1724 (KTWT…TTSD).

It functions in the pathway mycotoxin biosynthesis. Ankyrin repeat domain-containing protein; part of the satratoxin SC1 cluster involved in the biosynthesis of satratoxins, trichothecene mycotoxins that are associated with human food poisonings. Satratoxins are suggested to be made by products of multiple gene clusters (SC1, SC2 and SC3) that encode 21 proteins in all, including polyketide synthases, acetyltransferases, and other enzymes expected to modify the trichothecene skeleton. SC1 encodes 10 proteins, SAT1 to SAT10. The largest are SAT8, which encodes a putative polyketide synthase (PKS) with a conventional non-reducing architecture, and SAT10, a putative protein containing four ankyrin repeats and thus may be involved in protein scaffolding. The putative short-chain reductase SAT3 may assist the PKS in some capacity. SAT6 contains a secretory lipase domain and acts probably as a trichothecene esterase. SAT5 encodes a putative acetyltransferase, and so, with SAT6, may affect endogenous protection from toxicity. The probable transcription factor SAT9 may regulate the expression of the SC1 cluster. SC2 encodes proteins SAT11 to SAT16, the largest of which encodes the putative reducing PKS SAT13. SAT11 is a cytochrome P450 monooxygenase, while SAT14 and SAT16 are probable acetyltransferases. The SC2 cluster may be regulated by the transcription factor SAT15. SC3 is a small cluster that encodes 5 proteins, SAT17 to SAT21. SAT21 is a putative MFS-type transporter which may have a role in exporting secondary metabolites. The four other proteins putatively encoded in SC3 include the taurine hydroxylase-like protein SAT17, the O-methyltransferase SAT18, the acetyltransferase SAT19, and the Cys6-type zinc finger SAT20, the latter being probably involved in regulation of SC3 expression. The protein is Ankyrin repeat domain-containing protein SAT10 of Stachybotrys chartarum (strain CBS 109288 / IBT 7711) (Toxic black mold).